The primary structure comprises 107 residues: DNA polymerase delta subunit 4 (107 aa).

The PCNA-interaction protein motif (PIP box) motif lies at 1-16; that stretch reads MGRKRLITDSYPVVKR. The interval 1 to 35 is disordered; the sequence is MGRKRLITDSYPVVKRREGSAGHSKGELAPDLGEE. Positions 15–28 are enriched in basic and acidic residues; that stretch reads KRREGSAGHSKGEL.

The protein belongs to the DNA polymerase delta subunit 4 family. Component of the tetrameric DNA polymerase delta complex (Pol-delta4), which consists of POLD1/p125, POLD2/p50, POLD3/p66/p68 and POLD4/p12, with POLD1 bearing DNA polymerase and 3' to 5' proofreading exonuclease activities. Within this complex, directly interacts with POLD1 and POLD2. Directly interacts with PCNA, as do POLD1 and POLD3; this interaction stimulates Pol-delta4 polymerase activity. As POLD1 and POLD2, directly interacts with WRNIP1; this interaction stimulates DNA polymerase delta-mediated DNA synthesis, independently of the presence of PCNA, possibly by increasing initiation frequency. Upon genotoxic stress induced by DNA damaging agents or by replication stress, POLD4 is proteolytically degraded and Pol-delta4 is converted into a trimeric form of the complex (Pol-delta3) that has an increased proofreading activity. The DNA polymerase delta complex interacts with POLDIP2; this interaction is probably mediated through direct binding to POLD2. Ubiquitinated; undergoes 'Lys-48'-linked ubiquitination in response to UV irradiation, leading to proteasomal degradation. This modification is partly mediated by RNF8 and by the DCX(DTL) E3 ubiquitin ligase complex (also called CRL4(CDT2)). Efficient degradation requires the presence of PCNA and is required for the inhibition of fork progression after DNA damage.

Its subcellular location is the nucleus. As a component of the tetrameric DNA polymerase delta 4 complex (Pol-delta4), plays a role in high fidelity genome replication and repair. Within this complex, increases the rate of DNA synthesis and decreases fidelity by regulating POLD1 polymerase and proofreading 3' to 5' exonuclease activity. Pol-delta4 participates in Okazaki fragment processing, through both the short flap pathway, as well as a nick translation system. Under conditions of DNA replication stress, required for the repair of broken replication forks through break-induced replication (BIR), a mechanism that may induce segmental genomic duplications of up to 200 kb. Involved in Pol-delta4 translesion synthesis (TLS) of templates carrying O6-methylguanine or abasic sites. Its degradation in response to DNA damage is required for the inhibition of fork progression and cell survival. This Bos taurus (Bovine) protein is DNA polymerase delta subunit 4 (POLD4).